The chain runs to 183 residues: ATP-dependent protease subunit HslV (183 aa).

Residue Thr-2 is part of the active site. 3 residues coordinate Na(+): Ala-157, Cys-160, and Thr-163.

This sequence belongs to the peptidase T1B family. HslV subfamily. A double ring-shaped homohexamer of HslV is capped on each side by a ring-shaped HslU homohexamer. The assembly of the HslU/HslV complex is dependent on binding of ATP.

The protein resides in the cytoplasm. It catalyses the reaction ATP-dependent cleavage of peptide bonds with broad specificity.. Allosterically activated by HslU binding. Functionally, protease subunit of a proteasome-like degradation complex believed to be a general protein degrading machinery. The polypeptide is ATP-dependent protease subunit HslV (Marinomonas sp. (strain MWYL1)).